The sequence spans 469 residues: 3-isopropylmalate dehydratase large subunit (469 aa).

3 residues coordinate [4Fe-4S] cluster: C350, C410, and C413.

This sequence belongs to the aconitase/IPM isomerase family. LeuC type 1 subfamily. Heterodimer of LeuC and LeuD. It depends on [4Fe-4S] cluster as a cofactor.

The enzyme catalyses (2R,3S)-3-isopropylmalate = (2S)-2-isopropylmalate. Its pathway is amino-acid biosynthesis; L-leucine biosynthesis; L-leucine from 3-methyl-2-oxobutanoate: step 2/4. Functionally, catalyzes the isomerization between 2-isopropylmalate and 3-isopropylmalate, via the formation of 2-isopropylmaleate. This Brucella melitensis biotype 2 (strain ATCC 23457) protein is 3-isopropylmalate dehydratase large subunit.